A 327-amino-acid chain; its full sequence is D-threonate 4-phosphate dehydrogenase (327 aa).

Substrate-binding residues include H139 and T140. A divalent metal cation contacts are provided by H169, H213, and H268. Residues K276, N285, and R294 each coordinate substrate.

The protein belongs to the PdxA family. PdxA2 subfamily. In terms of assembly, homodimer. It depends on a divalent metal cation as a cofactor.

It carries out the reaction 4-O-phospho-D-threonate + NAD(+) = dihydroxyacetone phosphate + CO2 + NADH. Catalyzes the NAD-dependent oxidation and subsequent decarboxylation of D-threonate 4-phosphate to produce dihydroxyacetone phosphate (DHAP). Can also use 4-hydroxy-L-threonine 4-phosphate as substrate. This chain is D-threonate 4-phosphate dehydrogenase, found in Salmonella typhimurium (strain LT2 / SGSC1412 / ATCC 700720).